Consider the following 117-residue polypeptide: Gamma-aminobutyric acid receptor-associated protein-like 3 (117 aa).

The segment at 1–22 (MKFQYKEVHPFEYRKKEGEKIR) is interaction with beta-tubulin. Residues 36 to 68 (APKARVPDLDRRKYLVPSDLTDGQFYLLIRKRI) are interaction with GABRG2. Gly116 carries the Phosphatidylethanolamine amidated glycine lipid modification. Residue Lys117 is a propeptide, removed in mature form.

It belongs to the ATG8 family. In terms of assembly, interacts with GABRG2 and beta-tubulin. Post-translationally, the precursor molecule is cleaved by ATG4B to form the cytosolic form, GABARAPL3-I. This is activated by APG7L/ATG7, transferred to ATG3 and conjugated to phospholipid to form the membrane-bound form, GABARAPL3-II. ATG4B also mediates the delipidation required for GABARAPL1 recycling when autophagosomes fuse with lysosomes. In terms of tissue distribution, ubiquitous. Expressed at very high levels in the brain, heart, peripheral blood leukocytes, liver, kidney, placenta and skeletal muscle. Expressed at very low levels in thymus and small intestine.

Its subcellular location is the cytoplasm. The protein resides in the cytoskeleton. The protein localises to the cytoplasmic vesicle. It localises to the autophagosome membrane. Ubiquitin-like modifier involved in autophagosome formation. Whereas LC3s are involved in elongation of the phagophore membrane, the GABARAP/GATE-16 subfamily is essential for a later stage in autophagosome maturation. The chain is Gamma-aminobutyric acid receptor-associated protein-like 3 (GABARAPL3) from Homo sapiens (Human).